The chain runs to 272 residues: HMP-PP phosphatase (272 aa).

Aspartate 8 functions as the Nucleophile in the catalytic mechanism. Mg(2+) is bound by residues aspartate 8, aspartate 10, and aspartate 212.

Belongs to the HAD-like hydrolase superfamily. Cof family. Mg(2+) is required as a cofactor.

The catalysed reaction is 4-amino-2-methyl-5-(diphosphooxymethyl)pyrimidine + H2O = 4-amino-2-methyl-5-(phosphooxymethyl)pyrimidine + phosphate + H(+). Catalyzes the hydrolysis of 4-amino-2-methyl-5-hydroxymethylpyrimidine pyrophosphate (HMP-PP) to 4-amino-2-methyl-5-hydroxymethylpyrimidine phosphate (HMP-P). The chain is HMP-PP phosphatase from Citrobacter koseri (strain ATCC BAA-895 / CDC 4225-83 / SGSC4696).